We begin with the raw amino-acid sequence, 165 residues long: Xanthine-guanine phosphoribosyltransferase (165 aa).

Residues 41–42 and 98–106 contribute to the 5-phospho-alpha-D-ribose 1-diphosphate site; these read RG and DDLTDTGKT. Aspartate 99 contacts Mg(2+). Aspartate 102 and isoleucine 145 together coordinate guanine. Xanthine is bound by residues aspartate 102 and isoleucine 145. Residues 102–106 and 144–145 contribute to the GMP site; these read DTGKT and WI.

It belongs to the purine/pyrimidine phosphoribosyltransferase family. XGPT subfamily. As to quaternary structure, homotetramer. Requires Mg(2+) as cofactor.

It is found in the cell inner membrane. The enzyme catalyses GMP + diphosphate = guanine + 5-phospho-alpha-D-ribose 1-diphosphate. It catalyses the reaction XMP + diphosphate = xanthine + 5-phospho-alpha-D-ribose 1-diphosphate. The catalysed reaction is IMP + diphosphate = hypoxanthine + 5-phospho-alpha-D-ribose 1-diphosphate. It participates in purine metabolism; GMP biosynthesis via salvage pathway; GMP from guanine: step 1/1. It functions in the pathway purine metabolism; XMP biosynthesis via salvage pathway; XMP from xanthine: step 1/1. Its function is as follows. Purine salvage pathway enzyme that catalyzes the transfer of the ribosyl-5-phosphate group from 5-phospho-alpha-D-ribose 1-diphosphate (PRPP) to the N9 position of the 6-oxopurines guanine and xanthine to form the corresponding ribonucleotides GMP (guanosine 5'-monophosphate) and XMP (xanthosine 5'-monophosphate), with the release of PPi. To a lesser extent, also acts on hypoxanthine. The polypeptide is Xanthine-guanine phosphoribosyltransferase (Chelativorans sp. (strain BNC1)).